The chain runs to 576 residues: Hemagglutinin-neuraminidase (576 aa).

A compositionally biased stretch (basic and acidic residues) spans 1-10 (MDGDRGKRDS). The tract at residues 1–24 (MDGDRGKRDSYWSTSPSGSTTKLA) is disordered. Topologically, residues 1–37 (MDGDRGKRDSYWSTSPSGSTTKLASGWERSSKVDTWL) are intravirion. Residues 10–14 (SYWST) form an incorporation in virion region. A compositionally biased stretch (polar residues) spans 11 to 23 (YWSTSPSGSTTKL). The chain crosses the membrane as a helical span at residues 38-58 (LILSFTQWALSIATVIICIII). An involved in interaction with F protein region spans residues 59–140 (SARQGYSTKE…RQELTQLCES (82 aa)). The Virion surface segment spans residues 59 to 576 (SARQGYSTKE…SIPKLCKAES (518 aa)). A glycan (N-linked (GlcNAc...) asparagine; by host) is linked at N77. 4 disulfides stabilise this stretch: C192–C216, C258–C271, C357–C469, and C463–C473. Residues 254–259 (NRKSCS) are involved in neuraminidase activity. 2 N-linked (GlcNAc...) asparagine; by host glycosylation sites follow: N499 and N511. A disulfide bridge connects residues C536 and C545.

It belongs to the paramyxoviruses hemagglutinin-neuraminidase family. As to quaternary structure, homotetramer; composed of disulfide-linked homodimers. Interacts with F protein trimer. Post-translationally, N-glycosylated; glycans consist of a mixture of high mannose-type oligosaccharides and of complex-type oligosaccharides.

It localises to the virion membrane. Its subcellular location is the host cell membrane. It catalyses the reaction Hydrolysis of alpha-(2-&gt;3)-, alpha-(2-&gt;6)-, alpha-(2-&gt;8)- glycosidic linkages of terminal sialic acid residues in oligosaccharides, glycoproteins, glycolipids, colominic acid and synthetic substrates.. In terms of biological role, attaches the virus to sialic acid-containing cell receptors and thereby initiating infection. Binding of HN protein to the receptor induces a conformational change that allows the F protein to trigger virion/cell membranes fusion. Functionally, neuraminidase activity ensures the efficient spread of the virus by dissociating the mature virions from the neuraminic acid containing glycoproteins. This chain is Hemagglutinin-neuraminidase (HN), found in Sendai virus (strain Harris) (SeV).